Consider the following 1140-residue polypeptide: DNA damage-binding protein 1 (1140 aa).

This sequence belongs to the DDB1 family. In terms of assembly, component of the UV-DDB complex which includes DDB1 and DDB2; the heterodimer dimerizes to give rise to a heterotetramer when bound to damaged DNA. The UV-DDB complex interacts with monoubiquitinated histone H2A and binds to XPC via the DDB2 subunit. Component of numerous DCX (DDB1-CUL4-X-box) E3 ubiquitin-protein ligase complexes which consist of a core of DDB1, CUL4A or CUL4B and RBX1. DDB1 may recruit specific substrate targeting subunits to the DCX complex. These substrate targeting subunits are generally known as DCAF (DDB1- and CUL4-associated factor) or CDW (CUL4-DDB1-associated WD40-repeat) proteins. Interacts with Fbw5 and gig. May interact with ohgt.

It localises to the cytoplasm. The protein resides in the nucleus. It participates in protein modification; protein ubiquitination. Its function is as follows. Protein, which is both involved in DNA repair and protein ubiquitination, as part of the UV-DDB complex and DCX (DDB1-CUL4-X-box) complexes, respectively. Core component of the UV-DDB complex (UV-damaged DNA-binding protein complex), a complex that recognizes UV-induced DNA damage and recruit proteins of the nucleotide excision repair pathway (the NER pathway) to initiate DNA repair. The UV-DDB complex preferentially binds to cyclobutane pyrimidine dimers (CPD), 6-4 photoproducts (6-4 PP), apurinic sites and short mismatches. Also functions as a component of numerous distinct DCX (DDB1-CUL4-X-box) E3 ubiquitin-protein ligase complexes which mediate the ubiquitination and subsequent proteasomal degradation of target proteins. The functional specificity of the DCX E3 ubiquitin-protein ligase complex is determined by the variable substrate recognition component recruited by DDB1. Required for degradation of gig. Required for genomic stability in the face of endogenous DNA lesions and for the response to MMS-induced DNA damage. Required for normal wing development. This chain is DNA damage-binding protein 1 (pic), found in Drosophila melanogaster (Fruit fly).